A 169-amino-acid polypeptide reads, in one-letter code: Large ribosomal subunit protein uL10 (169 aa).

It belongs to the universal ribosomal protein uL10 family. As to quaternary structure, part of the ribosomal stalk of the 50S ribosomal subunit. The N-terminus interacts with L11 and the large rRNA to form the base of the stalk. The C-terminus forms an elongated spine to which L12 dimers bind in a sequential fashion forming a multimeric L10(L12)X complex.

Functionally, forms part of the ribosomal stalk, playing a central role in the interaction of the ribosome with GTP-bound translation factors. In Rickettsia felis (strain ATCC VR-1525 / URRWXCal2) (Rickettsia azadi), this protein is Large ribosomal subunit protein uL10.